We begin with the raw amino-acid sequence, 151 residues long: Guanylate kinase homolog (151 aa).

The 141-residue stretch at M1–Q141 folds into the Guanylate kinase-like domain.

The protein belongs to the guanylate kinase family.

This Vaccinia virus (strain Copenhagen) (VACV) protein is Guanylate kinase homolog.